We begin with the raw amino-acid sequence, 129 residues long: Small ribosomal subunit protein uS11 (129 aa).

The protein belongs to the universal ribosomal protein uS11 family. As to quaternary structure, part of the 30S ribosomal subunit. Interacts with proteins S7 and S18. Binds to IF-3.

In terms of biological role, located on the platform of the 30S subunit, it bridges several disparate RNA helices of the 16S rRNA. Forms part of the Shine-Dalgarno cleft in the 70S ribosome. This is Small ribosomal subunit protein uS11 from Methylobacterium sp. (strain 4-46).